A 147-amino-acid chain; its full sequence is D-aminoacyl-tRNA deacylase (147 aa).

The short motif at 137-138 (GP) is the Gly-cisPro motif, important for rejection of L-amino acids element.

The protein belongs to the DTD family. Homodimer.

Its subcellular location is the cytoplasm. It carries out the reaction glycyl-tRNA(Ala) + H2O = tRNA(Ala) + glycine + H(+). The enzyme catalyses a D-aminoacyl-tRNA + H2O = a tRNA + a D-alpha-amino acid + H(+). Its function is as follows. An aminoacyl-tRNA editing enzyme that deacylates mischarged D-aminoacyl-tRNAs. Also deacylates mischarged glycyl-tRNA(Ala), protecting cells against glycine mischarging by AlaRS. Acts via tRNA-based rather than protein-based catalysis; rejects L-amino acids rather than detecting D-amino acids in the active site. By recycling D-aminoacyl-tRNA to D-amino acids and free tRNA molecules, this enzyme counteracts the toxicity associated with the formation of D-aminoacyl-tRNA entities in vivo and helps enforce protein L-homochirality. The protein is D-aminoacyl-tRNA deacylase of Acinetobacter baumannii (strain ACICU).